The chain runs to 558 residues: Potassium-transporting ATPase potassium-binding subunit (558 aa).

12 helical membrane passes run 1–21 (MEII…SGYL), 66–86 (FNGF…WLFL), 127–147 (MIVM…VCIA), 166–186 (IVRF…ILLM), 245–265 (IWSN…MLFL), 281–301 (ALIL…LTMW), 327–347 (FGAG…TGSV), 354–374 (LTPI…VFGG), 377–397 (VGLM…SLMV), 416–436 (IVLV…LAFM), 482–502 (ISTG…QLMI), and 531–551 (IVFI…LGPI).

It belongs to the KdpA family. The system is composed of three essential subunits: KdpA, KdpB and KdpC.

Its subcellular location is the cell membrane. Part of the high-affinity ATP-driven potassium transport (or Kdp) system, which catalyzes the hydrolysis of ATP coupled with the electrogenic transport of potassium into the cytoplasm. This subunit binds the extracellular potassium ions and delivers the ions to the membrane domain of KdpB through an intramembrane tunnel. The sequence is that of Potassium-transporting ATPase potassium-binding subunit from Staphylococcus aureus (strain USA300).